Consider the following 94-residue polypeptide: Small ribosomal subunit protein uS19 (94 aa).

This sequence belongs to the universal ribosomal protein uS19 family.

Its function is as follows. Protein S19 forms a complex with S13 that binds strongly to the 16S ribosomal RNA. The polypeptide is Small ribosomal subunit protein uS19 (Finegoldia magna (strain ATCC 29328 / DSM 20472 / WAL 2508) (Peptostreptococcus magnus)).